A 34-amino-acid chain; its full sequence is Photosystem II reaction center protein M (34 aa).

The helical transmembrane segment at 7-27 (GFVASLLFVLVPTVFLIILFI) threads the bilayer.

It belongs to the PsbM family. In terms of assembly, PSII is composed of 1 copy each of membrane proteins PsbA, PsbB, PsbC, PsbD, PsbE, PsbF, PsbH, PsbI, PsbJ, PsbK, PsbL, PsbM, PsbT, PsbX, PsbY, PsbZ, Psb30/Ycf12, peripheral proteins PsbO, CyanoQ (PsbQ), PsbU, PsbV and a large number of cofactors. It forms dimeric complexes.

The protein localises to the cellular thylakoid membrane. One of the components of the core complex of photosystem II (PSII). PSII is a light-driven water:plastoquinone oxidoreductase that uses light energy to abstract electrons from H(2)O, generating O(2) and a proton gradient subsequently used for ATP formation. It consists of a core antenna complex that captures photons, and an electron transfer chain that converts photonic excitation into a charge separation. This subunit is found at the monomer-monomer interface. This is Photosystem II reaction center protein M from Synechococcus sp. (strain WH7803).